A 293-amino-acid polypeptide reads, in one-letter code: Protease HtpX homolog (293 aa).

The next 2 helical transmembrane spans lie at 4–24 (IFLF…TLRV) and 40–60 (SLLI…LLIS). Histidine 146 serves as a coordination point for Zn(2+). Glutamate 147 is an active-site residue. Histidine 150 contacts Zn(2+). A run of 2 helical transmembrane segments spans residues 161-181 (LIQG…GYFI) and 197-217 (FITV…IVAW). Glutamate 223 provides a ligand contact to Zn(2+).

The protein belongs to the peptidase M48B family. The cofactor is Zn(2+).

It localises to the cell inner membrane. The protein is Protease HtpX homolog of Bordetella petrii (strain ATCC BAA-461 / DSM 12804 / CCUG 43448).